The chain runs to 586 residues: Laccase-9 (586 aa).

Positions 1–25 are cleaved as a signal peptide; sequence MPRVHHSLSNQAFLVLLLFSSIASA. 2 consecutive Plastocyanin-like domains span residues 33-149 and 159-307; these read HVKD…PRSG and KEVP…YEGA. 3 N-linked (GlcNAc...) asparagine glycosylation sites follow: N52, N74, and N79. The Cu cation site is built by H83 and H85. N-linked (GlcNAc...) asparagine glycosylation is present at N111. Cu cation-binding residues include H128 and H130. 5 N-linked (GlcNAc...) asparagine glycosylation sites follow: N236, N333, N385, N403, and N451. The region spanning 411–552 is the Plastocyanin-like 3 domain; that stretch reads DFPDQPPLKF…MMAFIVQNGP (142 aa). 7 residues coordinate Cu cation: H469, H472, H474, H531, C532, H533, and H537.

It belongs to the multicopper oxidase family. The cofactor is Cu cation. As to expression, predominantly expressed in roots.

Its subcellular location is the secreted. The protein localises to the extracellular space. It is found in the apoplast. The enzyme catalyses 4 hydroquinone + O2 = 4 benzosemiquinone + 2 H2O. In terms of biological role, lignin degradation and detoxification of lignin-derived products. This is Laccase-9 (LAC9) from Arabidopsis thaliana (Mouse-ear cress).